The following is a 904-amino-acid chain: Phosphoenolpyruvate carboxylase (904 aa).

Residues 52–71 are disordered; sequence ISRRESDAPPSTLSEQLTGR. Active-site residues include H151 and K570.

This sequence belongs to the PEPCase type 1 family. Mg(2+) is required as a cofactor.

It catalyses the reaction oxaloacetate + phosphate = phosphoenolpyruvate + hydrogencarbonate. In terms of biological role, forms oxaloacetate, a four-carbon dicarboxylic acid source for the tricarboxylic acid cycle. In Xanthomonas oryzae pv. oryzae (strain MAFF 311018), this protein is Phosphoenolpyruvate carboxylase.